The sequence spans 362 residues: Methionine import ATP-binding protein MetN (362 aa).

In terms of domain architecture, ABC transporter spans 2–241 (IHIKNLSKTY…PQHDVTRAMV (240 aa)). 38–45 (GPSGAGKS) is an ATP binding site.

Belongs to the ABC transporter superfamily. Methionine importer (TC 3.A.1.24) family. The complex is composed of two ATP-binding proteins (MetN), two transmembrane proteins (MetI) and a solute-binding protein (MetQ).

Its subcellular location is the cell inner membrane. It catalyses the reaction L-methionine(out) + ATP + H2O = L-methionine(in) + ADP + phosphate + H(+). The catalysed reaction is D-methionine(out) + ATP + H2O = D-methionine(in) + ADP + phosphate + H(+). Functionally, part of the ABC transporter complex MetNIQ involved in methionine import. Responsible for energy coupling to the transport system. This chain is Methionine import ATP-binding protein MetN, found in Bordetella avium (strain 197N).